We begin with the raw amino-acid sequence, 229 residues long: Endonuclease V (229 aa).

Belongs to the endonuclease V family.

The protein resides in the cytoplasm. The enzyme catalyses Endonucleolytic cleavage at apurinic or apyrimidinic sites to products with a 5'-phosphate.. DNA repair enzyme involved in the repair of deaminated bases. Selectively cleaves double-stranded DNA at the second phosphodiester bond 3' to a deoxyinosine leaving behind the intact lesion on the nicked DNA. The protein is Endonuclease V of Methanopyrus kandleri (strain AV19 / DSM 6324 / JCM 9639 / NBRC 100938).